The sequence spans 881 residues: Leucine--tRNA ligase (881 aa).

Residues 48 to 58 (PYPSGKLHMGH) carry the 'HIGH' region motif. Residues 638–642 (KMSKS) carry the 'KMSKS' region motif. An ATP-binding site is contributed by lysine 641.

This sequence belongs to the class-I aminoacyl-tRNA synthetase family.

The protein resides in the cytoplasm. It carries out the reaction tRNA(Leu) + L-leucine + ATP = L-leucyl-tRNA(Leu) + AMP + diphosphate. This is Leucine--tRNA ligase from Herminiimonas arsenicoxydans.